A 605-amino-acid polypeptide reads, in one-letter code: Threonine--tRNA ligase (605 aa).

Positions 195–497 (DHRKVGKELG…LIEEYAGDFP (303 aa)) are catalytic. Residues cysteine 294, histidine 345, and histidine 474 each contribute to the Zn(2+) site.

Belongs to the class-II aminoacyl-tRNA synthetase family. In terms of assembly, homodimer. Zn(2+) is required as a cofactor.

It localises to the cytoplasm. It catalyses the reaction tRNA(Thr) + L-threonine + ATP = L-threonyl-tRNA(Thr) + AMP + diphosphate + H(+). In terms of biological role, catalyzes the attachment of threonine to tRNA(Thr) in a two-step reaction: L-threonine is first activated by ATP to form Thr-AMP and then transferred to the acceptor end of tRNA(Thr). Also edits incorrectly charged L-seryl-tRNA(Thr). The sequence is that of Threonine--tRNA ligase from Thermosynechococcus vestitus (strain NIES-2133 / IAM M-273 / BP-1).